Reading from the N-terminus, the 504-residue chain is Maturase K (504 aa).

This sequence belongs to the intron maturase 2 family. MatK subfamily.

The protein resides in the plastid. The protein localises to the chloroplast. Its function is as follows. Usually encoded in the trnK tRNA gene intron. Probably assists in splicing its own and other chloroplast group II introns. In Hamamelis mollis (Chinese witch hazel), this protein is Maturase K.